Here is a 240-residue protein sequence, read N- to C-terminus: Ribosomal RNA small subunit methyltransferase G (240 aa).

Residues Gly-80, Phe-85, 103–105 (DSS), 131–132 (AE), and Arg-150 contribute to the S-adenosyl-L-methionine site.

The protein belongs to the methyltransferase superfamily. RNA methyltransferase RsmG family.

Its subcellular location is the cytoplasm. Its function is as follows. Specifically methylates the N7 position of a guanine in 16S rRNA. In Thermoanaerobacter pseudethanolicus (strain ATCC 33223 / 39E) (Clostridium thermohydrosulfuricum), this protein is Ribosomal RNA small subunit methyltransferase G.